The following is a 267-amino-acid chain: NAD kinase 2 (267 aa).

Asp52 serves as the catalytic Proton acceptor. Residues 52-53 (DG), 124-125 (NE), Arg151, Asp153, 164-169 (TGYNKS), and Ala188 each bind NAD(+).

Belongs to the NAD kinase family. A divalent metal cation is required as a cofactor.

It is found in the cytoplasm. The enzyme catalyses NAD(+) + ATP = ADP + NADP(+) + H(+). Involved in the regulation of the intracellular balance of NAD and NADP, and is a key enzyme in the biosynthesis of NADP. Catalyzes specifically the phosphorylation on 2'-hydroxyl of the adenosine moiety of NAD to yield NADP. The sequence is that of NAD kinase 2 from Geobacillus kaustophilus (strain HTA426).